The sequence spans 692 residues: DNA ligase (692 aa).

NAD(+)-binding positions include aspartate 35–aspartate 39, serine 88–leucine 89, and glutamate 117. The active-site N6-AMP-lysine intermediate is the lysine 119. 4 residues coordinate NAD(+): arginine 140, glutamate 176, lysine 301, and lysine 325. Residues cysteine 416, cysteine 419, cysteine 434, and cysteine 439 each contribute to the Zn(2+) site. The 82-residue stretch at leucine 611–threonine 692 folds into the BRCT domain.

The protein belongs to the NAD-dependent DNA ligase family. LigA subfamily. It depends on Mg(2+) as a cofactor. Mn(2+) is required as a cofactor.

It catalyses the reaction NAD(+) + (deoxyribonucleotide)n-3'-hydroxyl + 5'-phospho-(deoxyribonucleotide)m = (deoxyribonucleotide)n+m + AMP + beta-nicotinamide D-nucleotide.. Its function is as follows. DNA ligase that catalyzes the formation of phosphodiester linkages between 5'-phosphoryl and 3'-hydroxyl groups in double-stranded DNA using NAD as a coenzyme and as the energy source for the reaction. It is essential for DNA replication and repair of damaged DNA. The sequence is that of DNA ligase from Mesomycoplasma hyopneumoniae (strain 7448) (Mycoplasma hyopneumoniae).